The chain runs to 561 residues: Putative cuticle collagen 145 (561 aa).

The signal sequence occupies residues 1 to 30; sequence MEKILVTLSTGAASIAVLAVLFTIPSLYNT. Pro residues predominate over residues 100–112; the sequence is TCPPGPPGPPGQP. 4 disordered regions span residues 100-134, 148-271, 367-398, and 422-540; these read TCPPGPPGPPGQPGQPGTPGAPGPKGEDNTSTYAP, PQGP…PGGP, TCPPGPPGPPGQPGQPGTPGAPGPKGEDNTAT, and TGPA…GPGL. 2 triple-helical region regions span residues 102–127 and 153–276; these read PPGPPGPPGQPGQPGTPGAPGPKGED and GPEG…LPGN. Low complexity-rich tracts occupy residues 164–209 and 219–265; these read AGPD…PGQD and APGA…DGQP. Over residues 367–379 the composition is skewed to pro residues; sequence TCPPGPPGPPGQP. Residues 413–544 are triple-helical region; sequence KCPQGPAGPT…PGGPGLPGND (132 aa). Composition is skewed to low complexity over residues 422 to 467 and 486 to 532; these read TGPA…PGQD and APGA…DGQP. A Collagen-like domain is found at 485–543; sequence GAPGAPGNAGPAGPAGQDGFPGQDGQPGPAGPAGQDGFPGNAGSDGQPGAPGGPGLPGN.

The protein belongs to the cuticular collagen family. Collagen polypeptide chains are complexed within the cuticle by disulfide bonds and other types of covalent cross-links.

Its function is as follows. Nematode cuticles are composed largely of collagen-like proteins. The cuticle functions both as an exoskeleton and as a barrier to protect the worm from its environment. The chain is Putative cuticle collagen 145 from Caenorhabditis briggsae.